A 467-amino-acid polypeptide reads, in one-letter code: A-type ATP synthase subunit B (467 aa).

The tract at residues 95–114 (GKGQPRDHMPLPPPEDFRDV) is disordered.

The protein belongs to the ATPase alpha/beta chains family. As to quaternary structure, has multiple subunits with at least A(3), B(3), C, D, E, F, H, I and proteolipid K(x).

The protein localises to the cell membrane. Its function is as follows. Component of the A-type ATP synthase that produces ATP from ADP in the presence of a proton gradient across the membrane. The B chain is a regulatory subunit. The chain is A-type ATP synthase subunit B from Pyrobaculum neutrophilum (strain DSM 2338 / JCM 9278 / NBRC 100436 / V24Sta) (Thermoproteus neutrophilus).